Consider the following 1232-residue polypeptide: Chromosome-associated kinesin KIF4A (1232 aa).

One can recognise a Kinesin motor domain in the interval 9-336 (PVRVALRCRP…LRYADRARKI (328 aa)). 88–95 (GQTGSGKT) is an ATP binding site. Positions 350–999 (ELNHLKQQVQ…IKQKLTLLQV (650 aa)) form a coiled coil. S394 carries the post-translational modification Phosphoserine. Residues 496–515 (AQVETSPETSRSSDAFTTQH) form a disordered region. Residues 497–515 (QVETSPETSRSSDAFTTQH) are compositionally biased toward polar residues. Residues 663–1232 (QWKQKKDKEV…GCSPIEEEAH (570 aa)) form a required for the interaction with PRC1 region. The short motif at 793–798 (PKLRRR) is the Nuclear localization signal element. A Phosphothreonine modification is found at T799. Phosphoserine is present on residues S801, S810, S815, and S951. Position 995 is a phosphothreonine (T995). The globular stretch occupies residues 1000 to 1232 (ASRQKHLPKD…GCSPIEEEAH (233 aa)). Residues S1001, S1013, S1017, S1028, and S1126 each carry the phosphoserine modification. Residues 1086 to 1144 (CSCKGWCGNKQCGCRKQKSDCGVDCCCDPTKCRNRQQGKDSLGTVERTQDSEGSFKLED) form a CRD; required for [4Fe-4S] cluster binding and localization to the spindle midzone and midbody during anaphase and telophase region. Residues 1122–1142 (QGKDSLGTVERTQDSEGSFKL) form a disordered region. Over residues 1132-1142 (RTQDSEGSFKL) the composition is skewed to basic and acidic residues. Residue T1181 is modified to Phosphothreonine. S1186 carries the post-translational modification Phosphoserine. K1194 participates in a covalent cross-link: Glycyl lysine isopeptide (Lys-Gly) (interchain with G-Cter in SUMO2). S1225 is subject to Phosphoserine.

It belongs to the TRAFAC class myosin-kinesin ATPase superfamily. Kinesin family. Chromokinesin subfamily. Interacts with the cytosolic iron-sulfur protein assembly (CIA) complex components CIAO2B and MMS19; the interactions facilitate the transfer of Fe-S clusters to KIF4A to ensure proper localization of KIF4A to mitotic machinery components. Interacts (via C-terminus) with unphosphorylated PRC1 (via N-terminus); the interaction is required for the progression of mitosis. The cofactor is [2Fe-2S] cluster. It depends on [4Fe-4S] cluster as a cofactor. Highly expressed in hematopoietic tissues, fetal liver, spleen, thymus and adult thymus and bone marrow. Lower levels are found in heart, testis, kidney, colon and lung.

The protein resides in the nucleus matrix. It is found in the cytoplasm. Its subcellular location is the cytoskeleton. The protein localises to the spindle. It localises to the midbody. The protein resides in the chromosome. In terms of biological role, iron-sulfur (Fe-S) cluster binding motor protein that has a role in chromosome segregation during mitosis. Translocates PRC1 to the plus ends of interdigitating spindle microtubules during the metaphase to anaphase transition, an essential step for the formation of an organized central spindle midzone and midbody and for successful cytokinesis. May play a role in mitotic chromosomal positioning and bipolar spindle stabilization. This Homo sapiens (Human) protein is Chromosome-associated kinesin KIF4A (KIF4A).